Reading from the N-terminus, the 253-residue chain is Serine/threonine-protein phosphatase 3 (253 aa).

Requires Mn(2+) as cofactor. Phosphorylated by YegI.

The catalysed reaction is O-phospho-L-seryl-[protein] + H2O = L-seryl-[protein] + phosphate. It carries out the reaction O-phospho-L-threonyl-[protein] + H2O = L-threonyl-[protein] + phosphate. With respect to regulation, activity dramatically decreases in the presence of the general protein phosphatase inhibitor sodium phosphate. Slightly inhibited by sodium fluoride. Activity decreases in the presence of the metal chelator EDTA. PP2C-like phosphatase that can dephosphorylate YegI. In vitro, can hydrolyze p-nitrophenyl phosphate (pNPP) to p-nitrophenol. The polypeptide is Serine/threonine-protein phosphatase 3 (Escherichia coli (strain K12)).